The following is a 396-amino-acid chain: MAAPCVSYGGAVSYRLLLWGRGSLARKQGLWKTAAPELQTNVRSQILRLRHTAFVIPKKNVPTSKRETYTEDFIKKQIEEFNIGKRHLANMMGEDPETFTQEDIDRAIAYLFPSGLFEKRARPVMKHPEQIFPRQRAIQWGEDGRPFHYLFYTGKQSYYSLMHDVYGMLLNLEKHQSHLQAKSLLPEKTVTRDVIGSRWLIKEELEEMLVEKLSDLDYMQFIRLLEKLLTSQCGAAEEEFVQRFRRSVTLESKKQLIEPVQYDEQGMAFSKSEGKRKTAKAEAIVYKHGSGRIKVNGIDYQLYFPITQDREQLMFPFHFVDRLGKHDVTCTVSGGGRSAQAGAIRLAMAKALCSFVTEDEVEWMRQAGLLTTDPRVRERKKPGQEGARRKFTWKKR.

Position 287 is an N6-acetyllysine (lysine 287). Residues 374-396 (PRVRERKKPGQEGARRKFTWKKR) are disordered.

It belongs to the universal ribosomal protein uS9 family. Component of the mitochondrial small ribosomal subunit (mt-SSU). Mature mammalian 55S mitochondrial ribosomes consist of a small (28S) and a large (39S) subunit. The 28S small subunit contains a 12S ribosomal RNA (12S mt-rRNA) and 30 different proteins. The 39S large subunit contains a 16S rRNA (16S mt-rRNA), a copy of mitochondrial valine transfer RNA (mt-tRNA(Val)), which plays an integral structural role, and 52 different proteins.

It localises to the mitochondrion. The sequence is that of Small ribosomal subunit protein uS9m (MRPS9) from Homo sapiens (Human).